We begin with the raw amino-acid sequence, 308 residues long: MNKLIYGLAGPTASGKTSLSISIANKINAEIISVDSSLVYKGMNIGTAKPTLDEQGDIKHHLIDIIEPTESFSVADFITNVNKLKKEIWSRGKEVLLVGGTMLYFKGLIEGLSSLPESQLEIRQTLELERKAKGLQYLHQQLNKMDQESAQKINPNDQQRIFRALEVIMITGKKYSELVKTSKVGGLEEQLKLCALVPNDRSILHNNIELRFKQMLDQGFLDEVQSLRKNPKLTKETTAIRSVGYRQAWEYLDGDISYEEFVKKGIVATRQLAKRQLTWIRNWQDEINLVEVENQNKEQQILEYFDYK.

10–17 (GPTASGKT) provides a ligand contact to ATP. 12–17 (TASGKT) lines the substrate pocket. Interaction with substrate tRNA stretches follow at residues 35 to 38 (DSSL) and 159 to 163 (QRIFR).

Belongs to the IPP transferase family. Monomer. Requires Mg(2+) as cofactor.

It catalyses the reaction adenosine(37) in tRNA + dimethylallyl diphosphate = N(6)-dimethylallyladenosine(37) in tRNA + diphosphate. Functionally, catalyzes the transfer of a dimethylallyl group onto the adenine at position 37 in tRNAs that read codons beginning with uridine, leading to the formation of N6-(dimethylallyl)adenosine (i(6)A). The chain is tRNA dimethylallyltransferase from Francisella philomiragia subsp. philomiragia (strain ATCC 25017 / CCUG 19701 / FSC 153 / O#319-036).